The following is a 484-amino-acid chain: Glutamate--tRNA ligase (484 aa).

The short motif at 11 to 21 (PSPTGLLHIGN) is the 'HIGH' region element. The short motif at 255 to 259 (KLSKR) is the 'KMSKS' region element. K258 serves as a coordination point for ATP.

The protein belongs to the class-I aminoacyl-tRNA synthetase family. Glutamate--tRNA ligase type 1 subfamily. Monomer.

It localises to the cytoplasm. It catalyses the reaction tRNA(Glu) + L-glutamate + ATP = L-glutamyl-tRNA(Glu) + AMP + diphosphate. Functionally, catalyzes the attachment of glutamate to tRNA(Glu) in a two-step reaction: glutamate is first activated by ATP to form Glu-AMP and then transferred to the acceptor end of tRNA(Glu). The polypeptide is Glutamate--tRNA ligase (Streptococcus agalactiae serotype III (strain NEM316)).